The primary structure comprises 261 residues: MLYYPHIDPVAFRLGPLKVHWYGLMYLVGFAMAWGLALYRARDPKRHWTAQQVGDLIFYGALGLIIGGRLGYMLFYDFSNFIANPLTLFQVWRGGMSFHGGLIGVIVTTWIFSRRTHKRWMDVTDFVVPLVPLGLAAGRIGNFINGELWGRVTTVPWGMVFPNAGPLPRHPSQLYEFLLEGVLLFIVIWWFSAKLRPRFAVSSLFLLCYGLFRFTAEFFRQPDPQLGFVAFGWLTRGQELSLPMIIIGGFALWWAYRHKER.

The next 7 helical transmembrane spans lie at 19–39 (VHWYGLMYLVGFAMAWGLALY), 56–76 (LIFYGALGLIIGGRLGYMLFY), 92–112 (WRGGMSFHGGLIGVIVTTWIF), 126–146 (FVVPLVPLGLAAGRIGNFING), 173–193 (QLYEFLLEGVLLFIVIWWFSA), 199–219 (FAVSSLFLLCYGLFRFTAEFF), and 227–247 (GFVAFGWLTRGQELSLPMIII). Residue arginine 139 coordinates a 1,2-diacyl-sn-glycero-3-phospho-(1'-sn-glycerol).

Belongs to the Lgt family.

It is found in the cell inner membrane. It carries out the reaction L-cysteinyl-[prolipoprotein] + a 1,2-diacyl-sn-glycero-3-phospho-(1'-sn-glycerol) = an S-1,2-diacyl-sn-glyceryl-L-cysteinyl-[prolipoprotein] + sn-glycerol 1-phosphate + H(+). It functions in the pathway protein modification; lipoprotein biosynthesis (diacylglyceryl transfer). In terms of biological role, catalyzes the transfer of the diacylglyceryl group from phosphatidylglycerol to the sulfhydryl group of the N-terminal cysteine of a prolipoprotein, the first step in the formation of mature lipoproteins. This is Phosphatidylglycerol--prolipoprotein diacylglyceryl transferase from Coxiella burnetii (strain CbuK_Q154) (Coxiella burnetii (strain Q154)).